Consider the following 75-residue polypeptide: Cytochrome c oxidase subunit 6C (75 aa).

At 1–13 the chain is on the mitochondrial matrix side; the sequence is MASEVLVKPQMRG. Residues 14-54 traverse the membrane as a helical segment; that stretch reads LLARRLRIHMVGAFLVSLGVAALYKFGVAEPRKKAYADFYK. Residues 55–75 are Mitochondrial intermembrane-facing; the sequence is NYSAEKDFEEMKKAGLFRSIK.

Belongs to the cytochrome c oxidase subunit 6c family. As to quaternary structure, component of the cytochrome c oxidase (complex IV, CIV), a multisubunit enzyme composed of 14 subunits. The complex is composed of a catalytic core of 3 subunits MT-CO1, MT-CO2 and MT-CO3, encoded in the mitochondrial DNA, and 11 supernumerary subunits COX4I, COX5A, COX5B, COX6A, COX6B, COX6C, COX7A, COX7B, COX7C, COX8 and NDUFA4, which are encoded in the nuclear genome. The complex exists as a monomer or a dimer and forms supercomplexes (SCs) in the inner mitochondrial membrane with NADH-ubiquinone oxidoreductase (complex I, CI) and ubiquinol-cytochrome c oxidoreductase (cytochrome b-c1 complex, complex III, CIII), resulting in different assemblies (supercomplex SCI(1)III(2)IV(1) and megacomplex MCI(2)III(2)IV(2)).

The protein resides in the mitochondrion inner membrane. The protein operates within energy metabolism; oxidative phosphorylation. Functionally, component of the cytochrome c oxidase, the last enzyme in the mitochondrial electron transport chain which drives oxidative phosphorylation. The respiratory chain contains 3 multisubunit complexes succinate dehydrogenase (complex II, CII), ubiquinol-cytochrome c oxidoreductase (cytochrome b-c1 complex, complex III, CIII) and cytochrome c oxidase (complex IV, CIV), that cooperate to transfer electrons derived from NADH and succinate to molecular oxygen, creating an electrochemical gradient over the inner membrane that drives transmembrane transport and the ATP synthase. Cytochrome c oxidase is the component of the respiratory chain that catalyzes the reduction of oxygen to water. Electrons originating from reduced cytochrome c in the intermembrane space (IMS) are transferred via the dinuclear copper A center (CU(A)) of subunit 2 and heme A of subunit 1 to the active site in subunit 1, a binuclear center (BNC) formed by heme A3 and copper B (CU(B)). The BNC reduces molecular oxygen to 2 water molecules using 4 electrons from cytochrome c in the IMS and 4 protons from the mitochondrial matrix. The sequence is that of Cytochrome c oxidase subunit 6C (COX6C) from Plecturocebus donacophilus (Bolivian gray titi monkey).